We begin with the raw amino-acid sequence, 236 residues long: Penton protein H240R (236 aa).

This sequence belongs to the asfivirus H240R family.

It is found in the virion. Forms the penton at the fivefold vertices of the icosahedral capsid. Together with the minor capsid proteins (p17, p49, and M1249L), forms a complicated network immediately below the outer capsid shell, stabilizing the whole capsid. The polypeptide is Penton protein H240R (African swine fever virus (isolate Pig/Kenya/KEN-50/1950) (ASFV)).